The chain runs to 2194 residues: PDZ and LIM domain protein Zasp (2194 aa).

One can recognise a PDZ domain in the interval 8–90; sequence QIKLSRFDAQ…NFVITVQRGG (83 aa). The disordered stretch occupies residues 211 to 277; that stretch reads TGQSTPAFGN…KPPSTGGLPT (67 aa). Residues 228–253 show a composition bias toward low complexity; that stretch reads PQQLQQPQQQYNQHQQHYHQQQQQQQ. In terms of domain architecture, LIM zinc-binding 1 spans 280–339; that stretch reads NICTECERLITGVFVRIKDKNLHVECFKCATCGTSLKNQGYYNFNNKLYCDIHAKQAAIN. Positions 415-435 are enriched in low complexity; the sequence is AATPQAATATDSPAATASSSD. Disordered regions lie at residues 415–436, 457–476, 511–558, 580–611, 623–692, 896–940, 1223–1260, 1297–1322, 1550–1632, 1646–1738, and 1815–1837; these read AATP…SSDN, VALA…DQPF, GAAA…AVEE, SRQS…YIPP, VQQV…TTSE, AAAA…PRGS, LTQK…QRTQ, QSQS…PPAN, LNAS…QQPE, QREQ…YGKT, and APPP…SGYQ. Residues 515 to 530 are compositionally biased toward low complexity; it reads PKSPVSYPPQQQQQSP. 2 stretches are compositionally biased toward polar residues: residues 580-590 and 644-667; these read SRQSQRGSSFT and VGTS…TASA. Residues 676–692 are compositionally biased toward low complexity; the sequence is SSDSYTSTSTTTTTTSE. Residues 1598 to 1610 are compositionally biased toward polar residues; sequence QTGSITTGQSYQG. Low complexity-rich tracts occupy residues 1616–1630, 1646–1668, and 1699–1727; these read SEQS…YNQQ, QREQ…TRSQ, and SQSV…QNQS. LIM zinc-binding domains lie at 2018-2078, 2079-2138, and 2139-2194; these read PLCN…KYLA, PTCS…LFTT, and KCFA…NHAR.

As to quaternary structure, interacts with alpha-actinin (Actn). As to expression, expression is first detected in the proctodeum and the midgut primordium. In stage 11 embryos, expression is predominant in the leading edge of epidermal cells adjacent to the amnioserosa. Stage 12 embryos exhibit expression in the midgut and the leading edge. Expressed in several rows of germ band cells next to the leading edge at stage 14. Strong expression is visible in the midgut and pharyngeal muscles of stage 17 embryos. Also expressed in somatic muscles and visceral mesoderm. Colocalizes with mys (beta PS integrin) in myotendinous junctions and with Actn in muscle Z lines.

The protein localises to the cytoplasm. Its subcellular location is the cytoskeleton. Functionally, regulator of cell matrix adhesion having two related functions, one upstream of Actn organizing the Z line and the other downstream of integrins regulating assembly of integrin adhesion sites. Also required for the formation of myotendinous junctions in muscles. In Drosophila melanogaster (Fruit fly), this protein is PDZ and LIM domain protein Zasp (Zasp52).